The sequence spans 63 residues: Prokaryotic ubiquitin-like protein Pup (63 aa).

The interval 1–28 is disordered; sequence MPQEFEQIRSADQPLDSEESAPVAGART. The interval 19–57 is ARC ATPase binding; it reads ESAPVAGARTDDTVDALDAVLDDIESVLETNAEEYVGSF. Glutamate 63 participates in a covalent cross-link: Isoglutamyl lysine isopeptide (Glu-Lys) (interchain with K-? in acceptor proteins).

It belongs to the prokaryotic ubiquitin-like protein family. Strongly interacts with the proteasome-associated ATPase ARC through a hydrophobic interface; the interacting region of Pup lies in its C-terminal half. There is one Pup binding site per ARC hexamer ring.

It participates in protein degradation; proteasomal Pup-dependent pathway. Protein modifier that is covalently attached to lysine residues of substrate proteins, thereby targeting them for proteasomal degradation. The tagging system is termed pupylation. The protein is Prokaryotic ubiquitin-like protein Pup of Bifidobacterium dentium (strain ATCC 27534 / DSM 20436 / JCM 1195 / Bd1).